The following is a 1196-amino-acid chain: DNA-directed RNA polymerase subunit beta (1196 aa).

This sequence belongs to the RNA polymerase beta chain family. In terms of assembly, the RNAP catalytic core consists of 2 alpha, 1 beta, 1 beta' and 1 omega subunit. When a sigma factor is associated with the core the holoenzyme is formed, which can initiate transcription.

It carries out the reaction RNA(n) + a ribonucleoside 5'-triphosphate = RNA(n+1) + diphosphate. DNA-dependent RNA polymerase catalyzes the transcription of DNA into RNA using the four ribonucleoside triphosphates as substrates. The protein is DNA-directed RNA polymerase subunit beta of Lactococcus lactis subsp. cremoris (strain SK11).